The sequence spans 424 residues: Deoxyguanosinetriphosphate triphosphohydrolase-like protein (424 aa).

A disordered region spans residues methionine 1–valine 27. Residues aspartate 8–lysine 18 show a composition bias toward basic and acidic residues. In terms of domain architecture, HD spans arginine 67 to serine 217.

It belongs to the dGTPase family. Type 2 subfamily.

This Corynebacterium glutamicum (strain ATCC 13032 / DSM 20300 / JCM 1318 / BCRC 11384 / CCUG 27702 / LMG 3730 / NBRC 12168 / NCIMB 10025 / NRRL B-2784 / 534) protein is Deoxyguanosinetriphosphate triphosphohydrolase-like protein (dgt).